Reading from the N-terminus, the 232-residue chain is MTAQKMTAQEIIAFIGNAVKKTTVKVTFEGELAGAVPAEVTKLGNVLFGDWKDVEPLLANLTENVDYVVEQDGRNSAVPLLDKRNINARIEPGAIIRDQVTIGDNAVIMMGAVINIGAEIGPGTMIDMGAILGGRATVGKNSHIGAGAVLAGVIEPASAEPVRVGDNVLVGANAVVIEGVQIGSGSVVAAGAIVTQDVPENVVVAGVPARIIKEIDAQTQQKTALEEALRTL.

This sequence belongs to the transferase hexapeptide repeat family. DapH subfamily.

It carries out the reaction (S)-2,3,4,5-tetrahydrodipicolinate + acetyl-CoA + H2O = L-2-acetamido-6-oxoheptanedioate + CoA. It functions in the pathway amino-acid biosynthesis; L-lysine biosynthesis via DAP pathway; LL-2,6-diaminopimelate from (S)-tetrahydrodipicolinate (acetylase route): step 1/3. In terms of biological role, catalyzes the transfer of an acetyl group from acetyl-CoA to tetrahydrodipicolinate. This chain is 2,3,4,5-tetrahydropyridine-2,6-dicarboxylate N-acetyltransferase, found in Streptococcus suis (strain 98HAH33).